Reading from the N-terminus, the 463-residue chain is ATP-dependent protease ATPase subunit HslU (463 aa).

Residues I19, 61 to 66, D277, E341, and R413 contribute to the ATP site; that span reads GVGKTE.

It belongs to the ClpX chaperone family. HslU subfamily. As to quaternary structure, a double ring-shaped homohexamer of HslV is capped on each side by a ring-shaped HslU homohexamer. The assembly of the HslU/HslV complex is dependent on binding of ATP.

Its subcellular location is the cytoplasm. In terms of biological role, ATPase subunit of a proteasome-like degradation complex; this subunit has chaperone activity. The binding of ATP and its subsequent hydrolysis by HslU are essential for unfolding of protein substrates subsequently hydrolyzed by HslV. HslU recognizes the N-terminal part of its protein substrates and unfolds these before they are guided to HslV for hydrolysis. The sequence is that of ATP-dependent protease ATPase subunit HslU from Bacillus anthracis (strain A0248).